Here is a 254-residue protein sequence, read N- to C-terminus: Imidazole glycerol phosphate synthase subunit HisF (254 aa).

Catalysis depends on residues D11 and D130.

Belongs to the HisA/HisF family. Heterodimer of HisH and HisF.

Its subcellular location is the cytoplasm. It carries out the reaction 5-[(5-phospho-1-deoxy-D-ribulos-1-ylimino)methylamino]-1-(5-phospho-beta-D-ribosyl)imidazole-4-carboxamide + L-glutamine = D-erythro-1-(imidazol-4-yl)glycerol 3-phosphate + 5-amino-1-(5-phospho-beta-D-ribosyl)imidazole-4-carboxamide + L-glutamate + H(+). The protein operates within amino-acid biosynthesis; L-histidine biosynthesis; L-histidine from 5-phospho-alpha-D-ribose 1-diphosphate: step 5/9. In terms of biological role, IGPS catalyzes the conversion of PRFAR and glutamine to IGP, AICAR and glutamate. The HisF subunit catalyzes the cyclization activity that produces IGP and AICAR from PRFAR using the ammonia provided by the HisH subunit. The chain is Imidazole glycerol phosphate synthase subunit HisF from Solibacter usitatus (strain Ellin6076).